Consider the following 118-residue polypeptide: Large ribosomal subunit protein uL24 (118 aa).

It belongs to the universal ribosomal protein uL24 family. As to quaternary structure, part of the 50S ribosomal subunit.

Its function is as follows. One of two assembly initiator proteins, it binds directly to the 5'-end of the 23S rRNA, where it nucleates assembly of the 50S subunit. In terms of biological role, one of the proteins that surrounds the polypeptide exit tunnel on the outside of the subunit. In Prochlorococcus marinus (strain NATL2A), this protein is Large ribosomal subunit protein uL24.